Reading from the N-terminus, the 265-residue chain is H-2 class II histocompatibility antigen, A beta chain (265 aa).

An N-terminal signal peptide occupies residues 1–27 (MALQIPSLLLSAAVVVLMVLSSPGTEG). The beta-1 stretch occupies residues 28 to 122 (GDSERHFVYQ…PETHTSLRRL (95 aa)). Topologically, residues 28 to 226 (GDSERHFVYQ…RAQSESAWSK (199 aa)) are extracellular. 2 cysteine pairs are disulfide-bonded: C42/C106 and C145/C201. N46 carries N-linked (GlcNAc...) asparagine glycosylation. Residues 123 to 216 (EQPNVVISLS…SLKSPITVEW (94 aa)) form a beta-2 region. The region spanning 125–213 (PNVVISLSRT…EHPSLKSPIT (89 aa)) is the Ig-like C1-type domain. Residues 217 to 226 (RAQSESAWSK) are connecting peptide. Residues 227–247 (MLSGIGGCVLGVIFLGLGLFI) traverse the membrane as a helical segment. Topologically, residues 248 to 265 (RHRSQKGPRGPPPAGLLQ) are cytoplasmic.

This sequence belongs to the MHC class II family. In terms of processing, ubiquitinated in immature dendritic cells leading to down-regulation of MHC class II.

It is found in the membrane. In Mus musculus (Mouse), this protein is H-2 class II histocompatibility antigen, A beta chain (H2-Ab1).